Consider the following 470-residue polypeptide: Neuronal acetylcholine receptor subunit beta-4 (470 aa).

The N-terminal stretch at 1–3 is a signal peptide; that stretch reads STA. The Extracellular segment spans residues 4–216; it reads ADAEEKLMNH…IIKRKPLFYT (213 aa). N-linked (GlcNAc...) asparagine glycans are attached at residues Asn-29, Asn-118, and Asn-146. Cysteines 133 and 147 form a disulfide. The chain crosses the membrane as a helical span at residues 217–237; it reads INLIIPCVLITSLAILVFYLP. Topologically, residues 238–245 are cytoplasmic; that stretch reads SDCGEKMT. Position 242 (Glu-242) interacts with Na(+). The helical transmembrane segment at 246-266 threads the bilayer; sequence LCISVLLALTVFLLLISKIVP. The Extracellular portion of the chain corresponds to 267 to 278; it reads PTSLDVPLIGKY. The helical transmembrane segment at 279–299 threads the bilayer; sequence LMFTMVLVTFSIVTSVCVLNV. The Cytoplasmic segment spans residues 300–438; it reads HHRSPSTHTM…WKYVAMVVDR (139 aa). Residues 439-459 traverse the membrane as a helical segment; sequence LFLWIFVLVCVLGTVGLFLQP. Topologically, residues 460-470 are extracellular; the sequence is LFQNHIAATNP.

It belongs to the ligand-gated ion channel (TC 1.A.9) family. Acetylcholine receptor (TC 1.A.9.1) subfamily. Beta-4/CHRNB4 sub-subfamily. Neuronal AChR is composed of two different types of subunits: alpha and beta. CHRNB4/Beta-4 subunit can be combined to CHRNA2/alpha-2, CHRNA3/alpha-3 or CHRNA4/alpha-4, CHRNA5/alpha-5 and CHRNB3/beta-3 to give rise to functional receptors.

It localises to the synaptic cell membrane. Its subcellular location is the cell membrane. It carries out the reaction Ca(2+)(in) = Ca(2+)(out). The enzyme catalyses K(+)(in) = K(+)(out). The catalysed reaction is Na(+)(in) = Na(+)(out). With respect to regulation, activated by a myriad of ligands such as acetylcholine, cytisine, nicotine, choline and epibatidine. The heteropentamer CHRNA3:CHRNB4 activity is blocked by the alpha-conotoxin ImI and AuIB. Component of neuronal acetylcholine receptors (nAChRs) that function as pentameric, ligand-gated cation channels with high calcium permeability among other activities. nAChRs are excitatory neurotrasnmitter receptors formed by a collection of nAChR subunits known to mediate synaptic transmission in the nervous system and the neuromuscular junction. Each nAchR subunit confers differential attributes to channel properties, including activation, deactivation and desensitization kinetics, pH sensitivity, cation permeability, and binding to allosteric modulators. CHRNB4 forms heteropentameric neuronal acetylcholine receptors with CHRNA2, CHRNA3 and CHRNA4, as well as CHRNA5 and CHRNB3 as accesory subunits. CHRNA3:CHRNB4 being predominant in neurons of the autonomic ganglia, it is known as ganglionic nicotinic receptor. CHRNA3:CHRNB4 or CHRNA3:CHRNA5:CHRNB4 play also an important role in the habenulo-interpeduncular tract, modulating the mesolimbic dopamine system and affecting reward circuits and addiction. Hypothalamic CHRNA3:CHRNB4 nAChR activation by nicotine leads to activation of POMC neurons and a decrease in food intake. The protein is Neuronal acetylcholine receptor subunit beta-4 (CHRNB4) of Gallus gallus (Chicken).